We begin with the raw amino-acid sequence, 140 residues long: Putative pre-16S rRNA nuclease (140 aa).

This sequence belongs to the YqgF nuclease family.

It is found in the cytoplasm. Functionally, could be a nuclease involved in processing of the 5'-end of pre-16S rRNA. The polypeptide is Putative pre-16S rRNA nuclease (Mannheimia succiniciproducens (strain KCTC 0769BP / MBEL55E)).